Here is a 393-residue protein sequence, read N- to C-terminus: DNA-directed RNA polymerase subunit Rpo1C (393 aa).

Belongs to the RNA polymerase beta' chain family. As to quaternary structure, part of the RNA polymerase complex.

Its subcellular location is the cytoplasm. It carries out the reaction RNA(n) + a ribonucleoside 5'-triphosphate = RNA(n+1) + diphosphate. DNA-dependent RNA polymerase (RNAP) catalyzes the transcription of DNA into RNA using the four ribonucleoside triphosphates as substrates. Forms part of the jaw domain. This Halococcus morrhuae (Micrococcus morrhuae) protein is DNA-directed RNA polymerase subunit Rpo1C.